The chain runs to 325 residues: Flavin-dependent thymidylate synthase (325 aa).

One can recognise a ThyX domain in the interval 12 to 267 (ISVRLLEYTG…PRLFRWAGPS (256 aa)). FAD-binding positions include Ser-65, 89–91 (RHR), and Gln-97. Residues 86–89 (QLVR) and 97–101 (QLSHR) contribute to the dUMP site. A ThyX motif motif is present at residues 89–99 (RHRVASYTQLS). The segment at 110–159 (AALKACESIGLDCPSKPAETEGGRKAAYRLYSQALERAARDFGASERFAI) is insert. DUMP is bound at residue Arg-205. 221 to 223 (NAR) contacts FAD. Arg-233 contributes to the dUMP binding site. Arg-233 (involved in ionization of N3 of dUMP, leading to its activation) is an active-site residue.

Belongs to the thymidylate synthase ThyX family. In terms of assembly, homotetramer. Requires FAD as cofactor.

It catalyses the reaction dUMP + (6R)-5,10-methylene-5,6,7,8-tetrahydrofolate + NADPH + H(+) = dTMP + (6S)-5,6,7,8-tetrahydrofolate + NADP(+). It functions in the pathway pyrimidine metabolism; dTTP biosynthesis. Functionally, catalyzes the reductive methylation of 2'-deoxyuridine-5'-monophosphate (dUMP) to 2'-deoxythymidine-5'-monophosphate (dTMP) while utilizing 5,10-methylenetetrahydrofolate (mTHF) as the methyl donor, and NADPH and FADH(2) as the reductant. This is Flavin-dependent thymidylate synthase from Aeropyrum pernix (strain ATCC 700893 / DSM 11879 / JCM 9820 / NBRC 100138 / K1).